A 220-amino-acid polypeptide reads, in one-letter code: Ribose-5-phosphate isomerase A (220 aa).

Residues 28-31 (TGST), 81-84 (DGAD), and 94-97 (KGGG) contribute to the substrate site. E103 (proton acceptor) is an active-site residue. Substrate is bound at residue K121.

Belongs to the ribose 5-phosphate isomerase family. As to quaternary structure, homodimer.

It carries out the reaction aldehydo-D-ribose 5-phosphate = D-ribulose 5-phosphate. It participates in carbohydrate degradation; pentose phosphate pathway; D-ribose 5-phosphate from D-ribulose 5-phosphate (non-oxidative stage): step 1/1. Catalyzes the reversible conversion of ribose-5-phosphate to ribulose 5-phosphate. This chain is Ribose-5-phosphate isomerase A, found in Shewanella baltica (strain OS223).